Reading from the N-terminus, the 227-residue chain is UPF0659 protein YMR090W (227 aa).

The protein belongs to the UPF0659 family.

It localises to the cytoplasm. This is UPF0659 protein YMR090W from Saccharomyces cerevisiae (strain ATCC 204508 / S288c) (Baker's yeast).